A 70-amino-acid chain; its full sequence is Brevinin-1PLb (70 aa).

The N-terminal stretch at 1 to 22 is a signal peptide; that stretch reads MFTTKKSMLLLFFLGTINLSLC. Positions 23–44 are excised as a propeptide; it reads EEERNAEEERRDEPDEMNVEVE. An intrachain disulfide couples C64 to C70.

As to expression, expressed by the skin glands.

The protein resides in the secreted. Antimicrobial activity against the Gram-negative bacterium E.coli, the Gram-positive bacterium S.aureus and the yeast C.albicans. This chain is Brevinin-1PLb, found in Lithobates palustris (Pickerel frog).